The chain runs to 220 residues: Elongation factor Ts (220 aa).

An involved in Mg(2+) ion dislocation from EF-Tu region spans residues 83 to 86 (TDFV).

It belongs to the EF-Ts family.

The protein resides in the cytoplasm. Functionally, associates with the EF-Tu.GDP complex and induces the exchange of GDP to GTP. It remains bound to the aminoacyl-tRNA.EF-Tu.GTP complex up to the GTP hydrolysis stage on the ribosome. The polypeptide is Elongation factor Ts (Synechococcus sp. (strain CC9605)).